The primary structure comprises 87 residues: MVNMKASMFLTFAGLVLLFVVCYASESEEKEFPKEMLSSIFAVDNDFKQEERDCAGYMRECNEKLCCSGYVCSSRWKWCVLPAPWRR.

A signal peptide spans 1–24 (MVNMKASMFLTFAGLVLLFVVCYA). Residues 25–52 (SESEEKEFPKEMLSSIFAVDNDFKQEER) constitute a propeptide that is removed on maturation. Intrachain disulfides connect Cys-54–Cys-67, Cys-61–Cys-72, and Cys-66–Cys-79.

The protein belongs to the neurotoxin 10 (Hwtx-1) family. 51 (Hntx-8) subfamily. Hntx-8 sub-subfamily. As to expression, expressed by the venom gland.

The protein resides in the secreted. Its function is as follows. Ion channel inhibitor. The sequence is that of U3-theraphotoxin-Hhn1p from Cyriopagopus hainanus (Chinese bird spider).